The following is a 778-amino-acid chain: Jhy protein homolog (778 aa).

Disordered stretches follow at residues 62–271 (DRIR…PKTD), 334–408 (QYES…LDTS), 631–654 (EKGKKHKKRSSSKNTKLKGYQKRD), and 721–746 (IPKPKPSNLTHQASKEQKNPTYAGKE). Residues 118–139 (PIEDKYSDLRYDPNWKSKKEEG) show a composition bias toward basic and acidic residues. Residues 223 to 234 (SSLSPYVKSSSS) show a composition bias toward low complexity. Positions 334–344 (QYESTKSSNVP) are enriched in polar residues. Over residues 358–371 (SRRPAKLKIRKQCK) the composition is skewed to basic residues. Residues 375–389 (GLKSSTTEEVTASQG) are compositionally biased toward polar residues. Residues 390–402 (NQNNPPRQQQNQN) are compositionally biased toward low complexity. Over residues 633–650 (GKKHKKRSSSKNTKLKGY) the composition is skewed to basic residues. Residues 733–746 (ASKEQKNPTYAGKE) are compositionally biased toward basic and acidic residues.

Its function is as follows. Required for the normal development of cilia in brain ependymal cells lining the ventricular surfaces. The protein is Jhy protein homolog of Homo sapiens (Human).